Consider the following 98-residue polypeptide: Citrate lyase acyl carrier protein (98 aa).

At S14 the chain carries O-(phosphoribosyl dephospho-coenzyme A)serine.

The protein belongs to the CitD family. As to quaternary structure, oligomer with a subunit composition of (alpha,beta,gamma)6.

The protein resides in the cytoplasm. Its function is as follows. Covalent carrier of the coenzyme of citrate lyase. This chain is Citrate lyase acyl carrier protein, found in Citrobacter koseri (strain ATCC BAA-895 / CDC 4225-83 / SGSC4696).